A 283-amino-acid chain; its full sequence is Diaminopimelate epimerase (283 aa).

Positions 13, 45, and 65 each coordinate substrate. The active-site Proton donor is the Cys74. Residues 75 to 76 (GN), Asn156, Asn190, and 208 to 209 (ER) each bind substrate. Residue Cys217 is the Proton acceptor of the active site. Residue 218–219 (GS) coordinates substrate.

This sequence belongs to the diaminopimelate epimerase family. Homodimer.

The protein localises to the cytoplasm. It carries out the reaction (2S,6S)-2,6-diaminopimelate = meso-2,6-diaminopimelate. The protein operates within amino-acid biosynthesis; L-lysine biosynthesis via DAP pathway; DL-2,6-diaminopimelate from LL-2,6-diaminopimelate: step 1/1. Functionally, catalyzes the stereoinversion of LL-2,6-diaminopimelate (L,L-DAP) to meso-diaminopimelate (meso-DAP), a precursor of L-lysine and an essential component of the bacterial peptidoglycan. This chain is Diaminopimelate epimerase, found in Bartonella henselae (strain ATCC 49882 / DSM 28221 / CCUG 30454 / Houston 1) (Rochalimaea henselae).